The following is a 306-amino-acid chain: N(1)-aminopropylagmatine ureohydrolase (306 aa).

Residues histidine 121, aspartate 145, histidine 147, aspartate 149, aspartate 228, and aspartate 230 each coordinate Mn(2+).

This sequence belongs to the arginase family. Requires Mn(2+) as cofactor.

The catalysed reaction is N(1)-(3-aminopropyl)agmatine + H2O = urea + spermidine. It functions in the pathway amine and polyamine biosynthesis; spermidine biosynthesis. Functionally, ureohydrolase involved in the biosynthesis of spermidine via the carboxyaminopropylagmatine (CAPA) pathway. Catalyzes the conversion of aminopropylagmatine (APA) to spermidine and urea. Is highly specific to APA and incapable of releasing measurable urea from CAPA, agmatine, arginine, guanidine, guanidinobutyrate and guanidinopropionate. This chain is N(1)-aminopropylagmatine ureohydrolase, found in Synechocystis sp. (strain ATCC 27184 / PCC 6803 / Kazusa).